The sequence spans 200 residues: Probable molybdenum cofactor guanylyltransferase (200 aa).

Residues 9–11 (LAG), K21, D69, and D100 contribute to the GTP site. D100 is a binding site for Mg(2+).

Belongs to the MobA family. Requires Mg(2+) as cofactor.

Its subcellular location is the cytoplasm. The enzyme catalyses Mo-molybdopterin + GTP + H(+) = Mo-molybdopterin guanine dinucleotide + diphosphate. Functionally, transfers a GMP moiety from GTP to Mo-molybdopterin (Mo-MPT) cofactor (Moco or molybdenum cofactor) to form Mo-molybdopterin guanine dinucleotide (Mo-MGD) cofactor. This is Probable molybdenum cofactor guanylyltransferase from Bacillus cereus (strain AH820).